The sequence spans 163 residues: MDLKQIEKLMIAMGRNKMKRIAIKRDGFELELERDTGPNIQEPVFYDNRLFAGFTQERPIPSDQNLGNPIVKEVGEKKEDKPVEGDFIVSPLVGTFYGAPSPESPAFVKPGDIVSEDTVVCIVEAMKVMNEVKAGMAGRVEEVLITNGDPVQFGSKLFRIVKA.

A Biotinyl-binding domain is found at 85–161 (GDFIVSPLVG…QFGSKLFRIV (77 aa)). At K127 the chain carries N6-biotinyllysine.

Homodimer.

It participates in lipid metabolism; fatty acid biosynthesis. Its function is as follows. This protein is a component of the acetyl coenzyme A carboxylase complex; first, biotin carboxylase catalyzes the carboxylation of the carrier protein and then the transcarboxylase transfers the carboxyl group to form malonyl-CoA. This chain is Biotin carboxyl carrier protein of acetyl-CoA carboxylase (accB), found in Chlamydia muridarum (strain MoPn / Nigg).